Consider the following 62-residue polypeptide: Alpha-conotoxin-like S1.1 (62 aa).

The N-terminal stretch at 1 to 21 (MGMRMMFTVFLLVVLAITVVS) is a signal peptide. Positions 22–48 (FPLDRESDGANAEARTHDHEKHALDRN) are excised as a propeptide. Intrachain disulfides connect Cys-50–Cys-56 and Cys-51–Cys-61. At Cys-61 the chain carries Cysteine amide.

The protein belongs to the conotoxin A superfamily. Expressed by the venom duct.

It is found in the secreted. Alpha-conotoxins act on postsynaptic membranes, they bind to the nicotinic acetylcholine receptors (nAChR) and thus inhibit them. In Conus striatus (Striated cone), this protein is Alpha-conotoxin-like S1.1.